The chain runs to 1441 residues: MEIAGYRGGSLRGSLQGSLRRSVSAWRSPSTSDVFGRSSREEDDEEALKWAALEKLPTYDRLRKGIMTGDGGEIQEVDIQGLGFQERKNLLEKLVRNAEEDNERFLLKLRNRMERVGIDNPTIEVRFEHLNINAEAFVGNRGVPTLVNFFVNKAIWILSALHLMPSGKRPISILHDVSGIIKPCRMTLLLGPPGAGKTTLLLALAGKLDNTLKVTGNVTYNGHGMHEFVPQRTSAYISQHDVHIGEMTVRETLAFSSRCQGVGTRYEMLTELSRREKEANIKPDPDVDVYMKAVAVEGQESVVTDYILKILGLDICADTMVGDGMIRGISGGQKKRVTTGEMLVGPSKALFMDEISTGLDSSTTFQIVNSLRQSVHILGGTALIALLQPAPETYDLFDDILLLSDGQIVYQGPRENVLEFFESMGFKCPERKGVADFLQEVTSRKDQQQYWVRENEPYRFVPVNEFSEAFKSFHVGAKLHEELSTPFDRSRNHPAALTTSKYGISKMELLKACIDREWLLMKRNSFVYIFKVVQLIVLALIAMTVFFRTKLPRNGLEDATIFFGAMFLGLVTHLFNGFAELAMSIAKLPVFYKQRDLLFYPPWAYALPTWILKIPISFVECGVWIAMTYYVIGFDPNVVRMFRHYLLLVLISQVASGLFRLLAAVGRDMVVADTFGAFAQLVLLVLGGFIIAREKIKKFWIWGYWSSPLMYAQNAIAVNEFLGHSWNKLVDATGQTLGERFLRNRGIFVDKNWYWIGVGALIGYMVLFNFLFILFLEWLDPLGKGQTTVSEEALQEKEANRTGANVELATRGSAATSDGGSVEIRKDGNRKKGMVLPFTPLSITFDNVKYSVDMPQEMKDRGVTEDKLLLLKGVSGAFRPGVLTALMGVSGRGKTTLMDVLAGRKTGGYIEGDIRISGYPKNQETFARISGYCEQNDIHSPHVTVYESLLYSAWLRLPAEVDEKQRKMFVDEVMDLVELNSLRGSLVGLPGVTGLSTEQRKRLTIAVELVANPSIIFMDEPTSGLDARAAAIVMRAVRNTVDTGRTVVCTIHQPSIDIFEAFDELFLMKRGGEEIYVGPLGRQSSHLIKYFESIDGVKKIKERYNPATWMLEVTTISQEEILGLNFAEVYRNSDLYKRNKDLIKELSTPPPGSKDLFFATQFSQSFVMQCLACLWKQHKSYWRNPSYTATRLFFTVVIALIFGTIFWDLGKKRSTSLDLINAMGSMYAAVLFIGIQNAQTVQPIVDVERTVFYREKAAGMYSALPYAYAQVLIEVPHILVQTLLYGLLVYSMIGFDWTAAKFLWYMFFMFFTFLYFTYYGMMAVAMTPNSDIAAIVAAAFYAIWNIFAGFIIPRPRIPIWWRWYYWACPVAWTLYGLVVSQFGEYTDTMSDVDETVKDFLRRFLGFRHDFLPVVGVMVVVFTVLFASIFAFSIKTLNFQRR.

The 273-residue stretch at 158 to 430 folds into the ABC transporter 1 domain; sequence LSALHLMPSG…FESMGFKCPE (273 aa). Residue 191–198 coordinates ATP; the sequence is GPPGAGKT. Residues 508 to 721 enclose the ABC transmembrane type-2 1 domain; sequence ELLKACIDRE…AQNAIAVNEF (214 aa). Helical transmembrane passes span 526–546, 559–579, 614–634, 646–666, 671–691, and 756–776; these read FVYI…MTVF, ATIF…NGFA, IPIS…VIGF, LLLV…AAVG, VADT…GFII, and IGVG…ILFL. The region spanning 843–1095 is the ABC transporter 2 domain; that stretch reads ITFDNVKYSV…HLIKYFESID (253 aa). Residue 888–895 coordinates ATP; sequence GVSGRGKT. The ABC transmembrane type-2 2 domain occupies 1168-1382; sequence MQCLACLWKQ…TLYGLVVSQF (215 aa). Transmembrane regions (helical) follow at residues 1187–1207, 1215–1235, 1275–1295, 1302–1322, 1332–1352, 1363–1383, and 1413–1433; these read YTAT…TIFW, TSLD…FIGI, VPHI…MIGF, FLWY…YGMM, IAAI…GFII, WYYW…SQFG, and VVGV…AFSI.

The protein belongs to the ABC transporter superfamily. ABCG family. PDR (TC 3.A.1.205) subfamily. In terms of tissue distribution, ubiquitous.

The protein localises to the cell membrane. Functionally, may be a general defense protein. Seems involved in turion (dormant buds) formation. Confers resistance to the diterpenoid antifungal agent sclareol. The sequence is that of Pleiotropic drug resistance protein TUR2 (TUR2) from Spirodela polyrhiza (Giant duckweed).